The primary structure comprises 436 residues: 3-phosphoshikimate 1-carboxyvinyltransferase (436 aa).

Residues Lys23, Ser24, and Arg28 each coordinate 3-phosphoshikimate. A phosphoenolpyruvate-binding site is contributed by Lys23. Phosphoenolpyruvate is bound by residues Gly97 and Arg126. Ser171, Gln173, Asp323, and Lys350 together coordinate 3-phosphoshikimate. Gln173 serves as a coordination point for phosphoenolpyruvate. Asp323 (proton acceptor) is an active-site residue. Residues Arg354 and Arg396 each contribute to the phosphoenolpyruvate site.

Belongs to the EPSP synthase family. Monomer.

It is found in the cytoplasm. The enzyme catalyses 3-phosphoshikimate + phosphoenolpyruvate = 5-O-(1-carboxyvinyl)-3-phosphoshikimate + phosphate. The protein operates within metabolic intermediate biosynthesis; chorismate biosynthesis; chorismate from D-erythrose 4-phosphate and phosphoenolpyruvate: step 6/7. Functionally, catalyzes the transfer of the enolpyruvyl moiety of phosphoenolpyruvate (PEP) to the 5-hydroxyl of shikimate-3-phosphate (S3P) to produce enolpyruvyl shikimate-3-phosphate and inorganic phosphate. The chain is 3-phosphoshikimate 1-carboxyvinyltransferase from Prochlorococcus marinus (strain MIT 9301).